The chain runs to 453 residues: Indoleamine 2,3-dioxygenase (453 aa).

His331 serves as a coordination point for heme.

Belongs to the indoleamine 2,3-dioxygenase family. Heme is required as a cofactor.

It carries out the reaction D-tryptophan + O2 = N-formyl-D-kynurenine. The enzyme catalyses L-tryptophan + O2 = N-formyl-L-kynurenine. The protein operates within cofactor biosynthesis; NAD(+) biosynthesis. Its function is as follows. Catalyzes the first step in tryptophan catabolism in order to supply de novo nicotinamide adenine dinucleotide (NAD(+)) via the kynurenine pathway. Plays a role in the cellular response to telomere uncapping. In Saccharomyces cerevisiae (strain ATCC 204508 / S288c) (Baker's yeast), this protein is Indoleamine 2,3-dioxygenase (BNA2).